A 319-amino-acid chain; its full sequence is Cytochrome c biogenesis protein CcsA (319 aa).

7 consecutive transmembrane segments (helical) span residues 9–29 (ILTH…LITL), 44–64 (GVIG…AYSG), 71–91 (LYES…FPYL), 143–163 (MVLG…LLVI), 225–245 (IISL…VWAN), 259–273 (TWAF…IYLH), and 286–306 (AIVA…VNLL).

This sequence belongs to the CcmF/CycK/Ccl1/NrfE/CcsA family. May interact with Ccs1.

The protein localises to the plastid. It is found in the chloroplast thylakoid membrane. Functionally, required during biogenesis of c-type cytochromes (cytochrome c6 and cytochrome f) at the step of heme attachment. The chain is Cytochrome c biogenesis protein CcsA from Oenothera parviflora (Small-flowered evening primrose).